We begin with the raw amino-acid sequence, 223 residues long: SCMKAAPMKEVGVRGQGSLAYPGLRTQGNLETLSGPNDATRGLTSLADTFEHVIEELLDEQQAIQPSKENKDADLYSTRVMLSSQVPLEPPLLFLLEEYKNYLDAANMSXRVRRHSDPARRGELSVCDSTSEWVTAAEKKTAVDMSGATVTVLEKVPVPKGQLKQYFYETKCSSKGYAKEGCRGIDKRYWNSQCRTTQSFVRALTMDNKKRVGWRFIRIDTSC.

The signal sequence occupies residues 1-5; that stretch reads SCMKA. Positions 6-114 are excised as a propeptide; it reads APMKEVGVRG…AANMSXRVRR (109 aa). Residue N107 is glycosylated (N-linked (GlcNAc...) asparagine). 2 disulfide bridges follow: C127-C194 and C172-C223.

This sequence belongs to the NGF-beta family.

It localises to the secreted. Promotes the survival of neuronal populations that are all located either in the central nervous system or directly connected to it. This Eryx jayakari (Arabian sand boa) protein is Neurotrophic factor BDNF precursor form (BDNF).